The following is a 566-amino-acid chain: Chaperone ric-8 (566 aa).

Belongs to the synembryn family. Interacts with GDP-bound G-alpha proteins goa-1 and gpa-16. Does not interact with G-alpha proteins when they are in complex with subunits beta and gamma. In terms of tissue distribution, present throughout the nervous system in juveniles and adults (at protein level).

Its subcellular location is the cytoplasm. The protein resides in the cell cortex. Its function is as follows. Chaperone that specifically binds and folds some, but not all, nascent G alpha proteins prior to G protein heterotrimer formation, promoting their stability and activity. Also acts as a guanine nucleotide exchange factor (GEF) for G alpha proteins by stimulating exchange of bound GDP for free GTP. Able to facilitate synaptic transmission in the nervous system probably by activating G(q)-alpha (egl-30). Also able to activate the G(s)-alpha in synaptic signaling network. Plays a key role in asymmetric spindle positioning, a step for asymmetric cell division that generates cell diversity during development by activating G(i)-alpha protein goa-1 and gpa-16 independently of G-protein coupled receptors. While it acts as a GEF for goa-1, it has no GEF activity toward gpa-16. In addition to its GEF activity, it is required for cortical subcellular localization of G-alpha proteins such as gpa-16. Also required for the interaction of goa-1 and gpr-1/2, suggesting that it may act by generating G-alpha proteins free from G-beta-gamma subunits, enabling gpr-1/2 to mediate asymmetric cell division. In Caenorhabditis elegans, this protein is Chaperone ric-8 (ric-8).